Reading from the N-terminus, the 491-residue chain is MSNILRRGRLEAAPDEEILRYASSMETDRWIFSADIAVDLAHTVMLKEQGIISAEDCSKILAGLLKIREEGMEKLDFSYEDIHISLESRLIDMVGEDVGGRMHSGRSRNDEVATCIRLTLREELLGLLEEIFALRKTLVSLAEKHTETLMPGFTHLQHAQPTTLAHHLCAHEAALGRDFDRVQDAFSRVNLCPLGAAAFASTGFNLNRKRTQELLGFEGLLENSMDAVSSRDFLIECASVFSNLMINLSRMAEELVIWSSSEFNFIELDDTYASTSSIMPQKKNPDTAELMRGKTGVAVGALMSLLTICKGLPLSYNRDLQEATPNIWRSVETVRASVRVMEGMVRTMKIHPEVLSAQSVTGFTTATELADTFVREAGIPFRTAHQIVGMLAREGEKPTIEKIDSVAEIVLGESLSSRGLTEKMIKEALNPVSNIKRRKIEGGPAPEEMQHYIGRQQTELELNEQEIATIKDSIDSAFEALLEVVDEYRKV.

This sequence belongs to the lyase 1 family. Argininosuccinate lyase subfamily.

The protein localises to the cytoplasm. The enzyme catalyses 2-(N(omega)-L-arginino)succinate = fumarate + L-arginine. Its pathway is amino-acid biosynthesis; L-arginine biosynthesis; L-arginine from L-ornithine and carbamoyl phosphate: step 3/3. This chain is Argininosuccinate lyase, found in Methanosarcina acetivorans (strain ATCC 35395 / DSM 2834 / JCM 12185 / C2A).